The following is a 316-amino-acid chain: Very-long-chain 3-oxooacyl-coA reductase let-767 (316 aa).

NADP(+) contacts are provided by residues 47 to 76 (ASWA…NVLL) and Asp106. Ser189 lines the substrate pocket. The active-site Proton acceptor is Tyr202. NADP(+) is bound at residue Lys206.

Belongs to the short-chain dehydrogenases/reductases (SDR) family. 17-beta-HSD 3 subfamily. In terms of tissue distribution, expressed in the gut of larva and adult.

The enzyme catalyses a very-long-chain (3R)-3-hydroxyacyl-CoA + NADP(+) = a very-long-chain 3-oxoacyl-CoA + NADPH + H(+). It catalyses the reaction (omega-1)-methyl-(3R)-hydroxy-fatty acyl-CoA + NADP(+) = (omega-1)-methyl-3-oxo-fatty acyl-CoA + NADPH + H(+). The catalysed reaction is a 17beta-hydroxy steroid + NADP(+) = a 17-oxo steroid + NADPH + H(+). It participates in lipid metabolism; fatty acid biosynthesis. Required for branched-chain fatty acid synthesis (such as (omega-1)-methyl-fatty acids). Catalyzes the reduction of the 3-keto-fatty acyl-CoA intermediate that is formed in each cycle of fatty acid elongation. Very long-chain fatty acids (VLCFAs) serve as precursors for ceramide and sphingolipids. Involved in hormone production as it metabolizes 4-androstendione (androst-4-ene-3,17-dione) into testosterone and estrone into estradiol (17beta-estradiol) in vitro, but the physiological steroid substrate is unknown. The protein is Very-long-chain 3-oxooacyl-coA reductase let-767 (let-767) of Caenorhabditis elegans.